The chain runs to 337 residues: Follistatin (337 aa).

Residues 1 to 22 form the signal peptide; it reads PGGVCLLLLLLCQFMEDRSAQA. In terms of domain architecture, TB spans 23–96; that stretch reads GNCWLRQAKN…TCENVDCGPG (74 aa). Intrachain disulfides connect cysteine 25/cysteine 48, cysteine 35/cysteine 81, cysteine 49/cysteine 84, cysteine 88/cysteine 99, cysteine 93/cysteine 109, cysteine 111/cysteine 143, cysteine 115/cysteine 136, cysteine 125/cysteine 157, cysteine 161/cysteine 172, cysteine 166/cysteine 182, cysteine 185/cysteine 218, cysteine 189/cysteine 211, cysteine 200/cysteine 232, cysteine 238/cysteine 249, cysteine 243/cysteine 260, cysteine 263/cysteine 295, cysteine 267/cysteine 288, and cysteine 277/cysteine 309. A Follistatin-like 1 domain is found at 87–110; the sequence is TCENVDCGPGKKCRMNKKNKPRCV. Residues 105–159 form the Kazal-like 1 domain; it reads NKPRCVCAPDCSNITWKGPVCGLDGKTYRNECALLKARCKEQPELEVQYQGKCKK. N-linked (GlcNAc...) asparagine glycosylation occurs at asparagine 117. Residues 160–183 enclose the Follistatin-like 2 domain; that stretch reads TCRDVFCPGSSTCVVDQTNNAYCV. The region spanning 179–234 is the Kazal-like 2 domain; the sequence is NAYCVTCNRICPEPTSSEQYLCGNDGVTYPSACHLRKATCLLGRSIGLAYEGKCIK. Residues 237–261 form the Follistatin-like 3 domain; the sequence is SCEDIQCTGGKKCLWDFKVGRGRCS. The region spanning 254 to 311 is the Kazal-like 3 domain; the sequence is KVGRGRCSLCGELCPESKSEEPVCASDNATYASECAMKEAACSSGVLLEVKHSGSCNS. Asparagine 281 carries N-linked (GlcNAc...) asparagine glycosylation. The tract at residues 309–337 is disordered; it reads CNSISEDTEDEEEDEDQDYSFPISSILEW. A compositionally biased stretch (acidic residues) spans 314-326; the sequence is EDTEDEEEDEDQD.

In terms of assembly, monomer.

The protein resides in the secreted. Functionally, binds directly to activin and functions as an activin antagonist. Specific inhibitor of the biosynthesis and secretion of pituitary follicle stimulating hormone (FSH). This Ovis aries (Sheep) protein is Follistatin.